The following is a 361-amino-acid chain: D-amino-acid oxidase (361 aa).

The first 22 residues, 1–22, serve as a signal peptide directing secretion; the sequence is MSNTIVVVGAGVIGLTSALLLS. Residues Ala10, Ile13, Lys34, His35, Ala45, Ser46, Gly50, and Asn52 each coordinate FAD. N-linked (GlcNAc...) asparagine glycans are attached at residues Asn193 and Asn222. (R)-lactate-binding residues include Tyr242, Tyr258, and Arg305. Residues Tyr242, Tyr258, and Arg305 each coordinate anthranilate. FAD is bound by residues Arg305, Ser332, Gly335, Tyr336, and Gln337. The Microbody targeting signal signature appears at 359 to 361; it reads SKL.

This sequence belongs to the DAMOX/DASOX family. The cofactor is FAD. In terms of processing, the N-terminus is blocked.

The protein resides in the peroxisome matrix. It catalyses the reaction a D-alpha-amino acid + O2 + H2O = a 2-oxocarboxylate + H2O2 + NH4(+). Catalyzes the oxidative deamination of D-amino acids with broad substrate specificity. Enables the organism to utilize D-amino acids as a source of nutrients. This is D-amino-acid oxidase from Fusarium vanettenii (Neocosmospora pisi).